Consider the following 424-residue polypeptide: MFLLPRFCLVCSIISTFGFQNPPTNVVSHFNDDWFLFGDSRTDCNHVVKTNPRNYSYMDLNPALCDSGKISSKAGNSIFRSFHFTDFYNYTGEGQQIIFYEGVNFTPYHAFKCTSVGNNDIWMQNKGLFYTQVYKKMAVYRSLTLVNVPYVYNGSAQPTALCKSGSLILNNPAYIAREANVGDYYYKSEADFSLSGCDEYIVPLCIFNGKFLSNTKYYDDSQYYFNKDTGVIYGLNSTETITTGFDFNCHYLVLPSGNYLAISNELLLTVPTKAICLNKRKVFTPVQVVDSRWNNARQSDNMTAVACQLPYCYFRNSTSNYVGIYDVNHGDAGFTSILSGLLYDSPCFSQQGVFRYDNVSTVWPLFPFGNCPTAASIISSDLPICVYDPLPIILLGILLGVAVIVIVVLLLYFMVDNGIRQHYA.

The N-terminal stretch at 1-16 (MFLLPRFCLVCSIIST) is a signal peptide. Residues 7–127 (FCLVCSIIST…NNDIWMQNKG (121 aa)) are esterase domain 1. The Virion surface portion of the chain corresponds to 17–392 (FGFQNPPTNV…PICVYDPLPI (376 aa)). The Nucleophile role is filled by serine 40. A disulfide bond links cysteine 44 and cysteine 65. N-linked (GlcNAc...) asparagine; by host glycans are attached at residues asparagine 54, asparagine 89, asparagine 153, asparagine 236, and asparagine 301. Intrachain disulfides connect cysteine 113–cysteine 162, cysteine 197–cysteine 276, and cysteine 205–cysteine 249. The tract at residues 128–266 (LFYTQVYKKM…GNYLAISNEL (139 aa)) is receptor binding. Positions 267–379 (LLTVPTKAIC…NCPTAASIIS (113 aa)) are esterase domain 2. The cysteines at positions 307 and 312 are disulfide-linked. Residue asparagine 316 is glycosylated (N-linked (GlcNAc...) asparagine; by host). Catalysis depends on charge relay system residues aspartate 326 and histidine 329. A disulfide bond links cysteine 347 and cysteine 371. Asparagine 358 carries N-linked (GlcNAc...) asparagine; by host glycosylation. A helical transmembrane segment spans residues 393–413 (ILLGILLGVAVIVIVVLLLYF). Over 414–424 (MVDNGIRQHYA) the chain is Intravirion.

The protein belongs to the influenza type C/coronaviruses hemagglutinin-esterase family. As to quaternary structure, homodimer; disulfide-linked. Forms a complex with the M protein in the pre-Golgi. Associates then with S-M complex to form a ternary complex S-M-HE. N-glycosylated in the host RER.

It is found in the virion membrane. The protein resides in the host cell membrane. It carries out the reaction N-acetyl-9-O-acetylneuraminate + H2O = N-acetylneuraminate + acetate + H(+). The catalysed reaction is N-acetyl-4-O-acetylneuraminate + H2O = N-acetylneuraminate + acetate + H(+). Functionally, structural protein that makes short spikes at the surface of the virus. Contains receptor binding and receptor-destroying activities. Mediates de-O-acetylation of N-acetyl-4-O-acetylneuraminic acid, which is probably the receptor determinant recognized by the virus on the surface of erythrocytes and susceptible cells. This receptor-destroying activity is important for virus release as it probably helps preventing self-aggregation and ensures the efficient spread of the progeny virus from cell to cell. May serve as a secondary viral attachment protein for initiating infection, the spike protein being the major one. May become a target for both the humoral and the cellular branches of the immune system. The protein is Hemagglutinin-esterase of Sus scrofa (Pig).